The sequence spans 461 residues: Secreted 45 kDa protein (461 aa).

The signal sequence occupies residues 1–27; that stretch reads MKKKIISAILMSTVILSAAAPLSGVYA. The segment covering 264-329 has biased composition (low complexity); the sequence is SSASASSSQA…GNTNSGTSTG (66 aa). Residues 264–343 form a disordered region; sequence SSASASSSQA…TTTGGSGINS (80 aa). The span at 330 to 340 shows a compositional bias: gly residues; the sequence is NTGGTTTGGSG. The Peptidase C51 domain maps to 330–459; sequence NTGGTTTGGS…VSASGVTFLM (130 aa).

This chain is Secreted 45 kDa protein (usp45), found in Lactococcus lactis subsp. cremoris (strain MG1363).